The primary structure comprises 140 residues: Small ribosomal subunit protein eS12 (140 aa).

It belongs to the eukaryotic ribosomal protein eS12 family. As to quaternary structure, part of the small subunit (SSU) processome, composed of more than 70 proteins and the RNA chaperone small nucleolar RNA (snoRNA) U3. Subunit of the 40S ribosomal complex.

The protein resides in the nucleus. It localises to the nucleolus. In terms of biological role, part of the small subunit (SSU) processome, first precursor of the small eukaryotic ribosomal subunit. During the assembly of the SSU processome in the nucleolus, many ribosome biogenesis factors, an RNA chaperone and ribosomal proteins associate with the nascent pre-rRNA and work in concert to generate RNA folding, modifications, rearrangements and cleavage as well as targeted degradation of pre-ribosomal RNA by the RNA exosome. Subunit of the 40S ribosomal complex. Involved in cold-warm shock-induced translocation of the RNA exosome components from the nucleolus to nucleoplasm. This is Small ribosomal subunit protein eS12 (rps-12) from Caenorhabditis elegans.